The following is a 244-amino-acid chain: Ribonuclease 3 2 (244 aa).

The RNase III domain maps to 11–136 (LKALLRRLGL…LLGALYLSVG (126 aa)). Mg(2+) is bound at residue Glu-50. Residue Asp-54 is part of the active site. The Mg(2+) site is built by Asp-122 and Glu-125. Glu-125 is a catalytic residue. One can recognise a DRBM domain in the interval 164–234 (NYKEALQAWT…AQQAYQDFIA (71 aa)).

It belongs to the ribonuclease III family. In terms of assembly, homodimer. It depends on Mg(2+) as a cofactor.

The protein resides in the cytoplasm. The enzyme catalyses Endonucleolytic cleavage to 5'-phosphomonoester.. Functionally, digests double-stranded RNA. Involved in the processing of primary rRNA transcript to yield the immediate precursors to the large and small rRNAs (23S and 16S). Processes some mRNAs, and tRNAs when they are encoded in the rRNA operon. Processes pre-crRNA and tracrRNA of type II CRISPR loci if present in the organism. The sequence is that of Ribonuclease 3 2 from Synechocystis sp. (strain ATCC 27184 / PCC 6803 / Kazusa).